The following is a 114-amino-acid chain: Histone H3-5 (114 aa).

The disordered stretch occupies residues 1–29; it reads NTGAKAPRKQLANKAARKSTNVNAVSGVK.

It belongs to the histone H3 family. In terms of assembly, the nucleosome is a histone octamer containing two molecules each of H2A, H2B, H3 and H4 assembled in one H3-H4 heterotetramer and two H2A-H2B heterodimers. The octamer wraps approximately 147 bp of DNA.

Its subcellular location is the nucleus. It is found in the chromosome. Its function is as follows. Core component of nucleosome. Nucleosomes wrap and compact DNA into chromatin, limiting DNA accessibility to the cellular machineries which require DNA as a template. Histones thereby play a central role in transcription regulation, DNA repair, DNA replication and chromosomal stability. DNA accessibility is regulated via a complex set of post-translational modifications of histones, also called histone code, and nucleosome remodeling. The polypeptide is Histone H3-5 (H3-5) (Stylonychia lemnae (Ciliate)).